The following is a 241-amino-acid chain: UDP-2,3-diacylglucosamine hydrolase (241 aa).

Asp-8, His-10, Asp-41, Asn-79, and His-114 together coordinate Mn(2+). A substrate-binding site is contributed by 79–80 (NR). Positions 122, 164, 167, and 195 each coordinate substrate. Residues His-195 and His-197 each contribute to the Mn(2+) site.

Belongs to the LpxH family. Mn(2+) serves as cofactor.

It is found in the cell inner membrane. It carries out the reaction UDP-2-N,3-O-bis[(3R)-3-hydroxytetradecanoyl]-alpha-D-glucosamine + H2O = 2-N,3-O-bis[(3R)-3-hydroxytetradecanoyl]-alpha-D-glucosaminyl 1-phosphate + UMP + 2 H(+). It functions in the pathway glycolipid biosynthesis; lipid IV(A) biosynthesis; lipid IV(A) from (3R)-3-hydroxytetradecanoyl-[acyl-carrier-protein] and UDP-N-acetyl-alpha-D-glucosamine: step 4/6. Functionally, hydrolyzes the pyrophosphate bond of UDP-2,3-diacylglucosamine to yield 2,3-diacylglucosamine 1-phosphate (lipid X) and UMP by catalyzing the attack of water at the alpha-P atom. Involved in the biosynthesis of lipid A, a phosphorylated glycolipid that anchors the lipopolysaccharide to the outer membrane of the cell. The protein is UDP-2,3-diacylglucosamine hydrolase of Aliivibrio fischeri (strain MJ11) (Vibrio fischeri).